The sequence spans 567 residues: Urease subunit alpha (567 aa).

Residues 129-567 (GGIDSHIHFI…LPLAQRYFLF (439 aa)) enclose the Urease domain. 3 residues coordinate Ni(2+): His-134, His-136, and Lys-217. The residue at position 217 (Lys-217) is an N6-carboxylysine. A substrate-binding site is contributed by His-219. Ni(2+)-binding residues include His-246 and His-272. His-320 (proton donor) is an active-site residue. A Ni(2+)-binding site is contributed by Asp-360.

The protein belongs to the metallo-dependent hydrolases superfamily. Urease alpha subunit family. As to quaternary structure, heterotrimer of UreA (gamma), UreB (beta) and UreC (alpha) subunits. Three heterotrimers associate to form the active enzyme. Ni cation is required as a cofactor. Carboxylation allows a single lysine to coordinate two nickel ions.

It localises to the cytoplasm. The catalysed reaction is urea + 2 H2O + H(+) = hydrogencarbonate + 2 NH4(+). It functions in the pathway nitrogen metabolism; urea degradation; CO(2) and NH(3) from urea (urease route): step 1/1. The chain is Urease subunit alpha from Pseudomonas entomophila (strain L48).